A 261-amino-acid chain; its full sequence is Hydroxyethylthiazole kinase (261 aa).

Met-40 contacts substrate. ATP is bound by residues Lys-116 and Thr-162. Residue Gly-189 coordinates substrate.

Belongs to the Thz kinase family. Requires Mg(2+) as cofactor.

The enzyme catalyses 5-(2-hydroxyethyl)-4-methylthiazole + ATP = 4-methyl-5-(2-phosphooxyethyl)-thiazole + ADP + H(+). The protein operates within cofactor biosynthesis; thiamine diphosphate biosynthesis; 4-methyl-5-(2-phosphoethyl)-thiazole from 5-(2-hydroxyethyl)-4-methylthiazole: step 1/1. Functionally, catalyzes the phosphorylation of the hydroxyl group of 4-methyl-5-beta-hydroxyethylthiazole (THZ). The polypeptide is Hydroxyethylthiazole kinase (Methanosarcina acetivorans (strain ATCC 35395 / DSM 2834 / JCM 12185 / C2A)).